A 97-amino-acid polypeptide reads, in one-letter code: Large ribosomal subunit protein bL28 (97 aa).

It belongs to the bacterial ribosomal protein bL28 family.

The protein is Large ribosomal subunit protein bL28 of Sphingopyxis alaskensis (strain DSM 13593 / LMG 18877 / RB2256) (Sphingomonas alaskensis).